The following is a 153-amino-acid chain: Probable inactive ribonuclease-like protein 13 (153 aa).

The N-terminal stretch at 1–22 (MASDAASLLVLQLVLQPTLVTG) is a signal peptide.

This sequence belongs to the pancreatic ribonuclease family.

It is found in the secreted. In terms of biological role, does not exhibit any ribonuclease activity. This chain is Probable inactive ribonuclease-like protein 13 (Rnase13), found in Rattus norvegicus (Rat).